The following is a 257-amino-acid chain: Thiazole synthase (257 aa).

The Schiff-base intermediate with DXP role is filled by K97. Residues G158, 184 to 185 (AG), and 206 to 207 (NT) each bind 1-deoxy-D-xylulose 5-phosphate.

The protein belongs to the ThiG family. Homotetramer. Forms heterodimers with either ThiH or ThiS.

The protein resides in the cytoplasm. The catalysed reaction is [ThiS sulfur-carrier protein]-C-terminal-Gly-aminoethanethioate + 2-iminoacetate + 1-deoxy-D-xylulose 5-phosphate = [ThiS sulfur-carrier protein]-C-terminal Gly-Gly + 2-[(2R,5Z)-2-carboxy-4-methylthiazol-5(2H)-ylidene]ethyl phosphate + 2 H2O + H(+). The protein operates within cofactor biosynthesis; thiamine diphosphate biosynthesis. Catalyzes the rearrangement of 1-deoxy-D-xylulose 5-phosphate (DXP) to produce the thiazole phosphate moiety of thiamine. Sulfur is provided by the thiocarboxylate moiety of the carrier protein ThiS. In vitro, sulfur can be provided by H(2)S. In Desulforamulus reducens (strain ATCC BAA-1160 / DSM 100696 / MI-1) (Desulfotomaculum reducens), this protein is Thiazole synthase.